Here is an 89-residue protein sequence, read N- to C-terminus: Dolichol-phosphate mannose synthase subunit 3 (89 aa).

The next 2 helical transmembrane spans lie at 7–27 (ILSL…AAII) and 33–53 (WLLP…MVGV).

The protein belongs to the DPM3 family. Component of the dolichol-phosphate mannose (DPM) synthase complex composed of DPMS1, DPMS2 and DPMS3; in the complex interacts directly with DPMS1 and DPMS2.

The protein localises to the endoplasmic reticulum membrane. The protein operates within protein modification; protein glycosylation. Regulates the biosynthesis of dolichol phosphate-mannose. Regulatory subunit of the dolichol-phosphate mannose (DPM) synthase complex; essential for the ER localization and stable expression of DPMS1. The sequence is that of Dolichol-phosphate mannose synthase subunit 3 from Arabidopsis thaliana (Mouse-ear cress).